The primary structure comprises 414 residues: Voltage-gated ClC-type chloride channel ClcB (414 aa).

11 consecutive transmembrane segments (helical) span residues 5–25 (LVIS…FHQA), 54–74 (ALTP…YQRY), 116–136 (SAIG…SVFA), 147–167 (LWVA…PLAG), 169–189 (LFIA…PVVI), 220–240 (VQYF…PLFL), 255–275 (LLPP…SLIF), 292–312 (TPPG…AVLA), 327–347 (LFVG…WPVL), 353–373 (LLMA…APIM), and 381–401 (MTGE…ATTI).

This sequence belongs to the chloride channel (TC 2.A.49) family. ClcB subfamily.

Its subcellular location is the cell inner membrane. Its function is as follows. Probably acts as an electrical shunt for an outwardly-directed proton pump that is linked to amino acid decarboxylation, as part of the extreme acid resistance (XAR) response. This is Voltage-gated ClC-type chloride channel ClcB from Yersinia pseudotuberculosis serotype O:1b (strain IP 31758).